A 440-amino-acid polypeptide reads, in one-letter code: SET domain-containing protein 4 (440 aa).

Positions 1 to 16 (MQKGKGRTSRIRRRKL) are enriched in basic residues. Residues 1 to 24 (MQKGKGRTSRIRRRKLCGSSESRG) form a disordered region. The 226-residue stretch at 48 to 273 (SNLAPACFPG…KHEEVFICYG (226 aa)) folds into the SET domain. S-adenosyl-L-methionine is bound at residue Tyr272.

This sequence belongs to the class V-like SAM-binding methyltransferase superfamily. SETD4 family. In terms of assembly, forms a ternary complex with TBK1 and ZNF268; the interaction with TBK1 is ZNF268-dependent and leads to TBK1 monomethylation.

Its subcellular location is the cytoplasm. It is found in the cytosol. The protein resides in the nucleus. It catalyses the reaction L-lysyl(4)-[histone H3] + S-adenosyl-L-methionine = N(6)-methyl-L-lysyl(4)-[histone H3] + S-adenosyl-L-homocysteine + H(+). The catalysed reaction is N(6)-methyl-L-lysyl(4)-[histone H3] + S-adenosyl-L-methionine = N(6),N(6)-dimethyl-L-lysyl(4)-[histone H3] + S-adenosyl-L-homocysteine + H(+). It carries out the reaction L-lysyl(20)-[histone H4] + S-adenosyl-L-methionine = N(6)-methyl-L-lysyl(20)-[histone H4] + S-adenosyl-L-homocysteine + H(+). The enzyme catalyses N(6)-methyl-L-lysyl(20)-[histone H4] + S-adenosyl-L-methionine = N(6),N(6)-dimethyl-L-lysyl(20)-[histone H4] + S-adenosyl-L-homocysteine + H(+). It catalyses the reaction N(6),N(6)-dimethyl-L-lysyl(20)-[histone H4] + S-adenosyl-L-methionine = N(6),N(6),N(6)-trimethyl-L-lysyl(20)-[histone H4] + S-adenosyl-L-homocysteine + H(+). The catalysed reaction is L-lysyl-[protein] + S-adenosyl-L-methionine = N(6)-methyl-L-lysyl-[protein] + S-adenosyl-L-homocysteine + H(+). Its function is as follows. Protein-lysine N-methyltransferase that methylates both histones and non-histone proteins. Via its catalytic activity, regulates many processes, including cell proliferation, cell differentiation, inflammatory response and apoptosis. Regulates the inflammatory response by mediating mono- and dimethylation of 'Lys-4' of histone H3 (H3K4me1 and H3K4me2, respectively), leading to activate the transcription of pro-inflammatory cytokines IL6 and TNF-alpha. Through the catalysis of TBK1 monomethylation, may regulate virus-induced interferon signaling. TBK1 monomethylation enhances its interaction with MAVS, STING and IRF3, hence promoting antiviral interferon signaling. Also involved in the regulation of stem cell quiescence by catalyzing the trimethylation of 'Lys-20' of histone H4 (H4K20me3), thereby promoting heterochromatin formation. In the brain, epigenetically controls quiescence of neural stem cells for sustaining a protected neural stem cell population and maintaining a stem cell reservoir for neurogenesis. Involved in proliferation, migration, paracrine and myogenic differentiation of bone marrow mesenchymal stem cells (BMSCs). Through the catalysis of XRCC5/Ku70 trimethylation, regulates BAX-mediated apoptosis. SETD4-catalyzed XRCC5 methylation results in XRCC5 translocation to the cytoplasm, where it interacts with BAX, sequestering it from the mitochondria, hence preventing BAX-mediated apoptosis. The sequence is that of SET domain-containing protein 4 from Homo sapiens (Human).